The primary structure comprises 542 residues: Quinidine resistance protein 2 (542 aa).

The Cytoplasmic segment spans residues Met-1–Cys-67. Position 21 is a phosphoserine (Ser-21). Thr-38 is modified (phosphothreonine). A Phosphoserine modification is found at Ser-40. A helical membrane pass occupies residues Ala-68 to Ile-88. The Extracellular portion of the chain corresponds to Glu-89 to Asn-100. The helical transmembrane segment at Val-101–Ala-121 threads the bilayer. The Cytoplasmic segment spans residues Asp-122–Arg-127. The chain crosses the membrane as a helical span at residues Pro-128–Gln-148. A topological domain (extracellular) is located at residue Thr-149. Residues Tyr-150–Ile-170 form a helical membrane-spanning segment. Over Asn-171–Tyr-187 the chain is Cytoplasmic. The chain crosses the membrane as a helical span at residues Val-188–Gly-208. Residues Leu-209–Arg-216 lie on the Extracellular side of the membrane. The chain crosses the membrane as a helical span at residues Ala-217–Leu-237. Topologically, residues Pro-238–Glu-300 are cytoplasmic. A helical membrane pass occupies residues Ile-301–Ala-321. At Leu-322 to Thr-333 the chain is on the extracellular side. A helical membrane pass occupies residues Val-334–Ile-354. The Cytoplasmic portion of the chain corresponds to Ala-355–Pro-413. The chain crosses the membrane as a helical span at residues Ala-414–Val-434. Residues Lys-435–Pro-437 are Extracellular-facing. The chain crosses the membrane as a helical span at residues Leu-438–Phe-458. Topologically, residues Ser-459–Ser-472 are cytoplasmic. Residues Thr-473–Leu-493 form a helical membrane-spanning segment. Over Ser-494–Gly-503 the chain is Extracellular. Residues Gly-504–Leu-524 form a helical membrane-spanning segment. The Cytoplasmic portion of the chain corresponds to Arg-525–Asn-542.

Belongs to the major facilitator superfamily. CAR1 family.

It localises to the cell membrane. Multidrug resistance transporter involved in resistance and adaptation to quinidine and to the herbicide barban (4-chloro-2-butynyl [3-chlorophenyl] carbamate). Implicated in potassium uptake. This is Quinidine resistance protein 2 (QDR2) from Saccharomyces cerevisiae (strain ATCC 204508 / S288c) (Baker's yeast).